Here is a 669-residue protein sequence, read N- to C-terminus: MGSNSSKISDLPKNEYLKKLSGPESISENDPFWNQLFSFSFPAPTSSSELKLLEEATISVCKSLVENNPRTGNLAALTKVFLSRTRELRLSAECQNHIFIWQTHNALFIICCLLKVFIRELSEEELQLHFTYEEKSPGSYSSDSEDLLEELLCSLVQLITDTPLLDITYEIAVEAISAMVVFLSCQLFHKEVLRQSISHKYLMQGPCLPYTSKLVKTLLYNFIRQEKPPPPGTHVFPQQSDGGGLLYGLASGVATGLWTVFTLGGAGSKAAASPELTSPLANQSLLLLLVLVNLTDAPDIPNPYRQAVSSFKNTQDSSPFPSSIPHTFQINFNSLYTALCEQQTSDQATLLLYTLLHQNSNVRTYVLARTDMENLVLPILEILYHVEERNSHHVYMALIILLILTEDDGFNRSIHEVILRNITWYSERVLTEISLGSLLILVVIRTIQYNMTRTRDKYLHTNCLAALANMSAQFRSLHQYAAQRIISLFSLLSKKHNKVLEQATQSLRGPLSSSDVPLPDYAQDLSVIEEVIRMMLEIINSCLTNSLHHNPNLVYALLYKRDLFEQFRTHPSFQDIMQNIDLVISFFSSRLLQAGAELSVERVLEIIKQGVVALPKDRLKKFPELKFKYVEEEQPEEFFIPYVWSLVYNSAVGLYWNPQDIQLFAMDSD.

G2 carries N-myristoyl glycine lipidation.

Belongs to the dymeclin family. Interacts with GOLM1 and PPIB. In terms of processing, myristoylated in vitro; myristoylation is not essential for protein targeting to Golgi compartment.

Its subcellular location is the cytoplasm. The protein resides in the golgi apparatus. It is found in the membrane. Necessary for correct organization of Golgi apparatus. Involved in bone development. The protein is Dymeclin (Dym) of Mus musculus (Mouse).